The chain runs to 198 residues: UPF0098 protein PH1269 (198 aa).

This sequence belongs to the UPF0098 family.

The protein is UPF0098 protein PH1269 of Pyrococcus horikoshii (strain ATCC 700860 / DSM 12428 / JCM 9974 / NBRC 100139 / OT-3).